Consider the following 729-residue polypeptide: Fatty acid oxidation complex subunit alpha (729 aa).

The tract at residues 1–189 (MLYKGDTLYL…KIGLVDGVVA (189 aa)) is enoyl-CoA hydratase/isomerase. Residue D296 participates in substrate binding. Residues 311-729 (ETPKHAAVLG…ARPVGALKTA (419 aa)) are 3-hydroxyacyl-CoA dehydrogenase. Residues M324, D343, 400 to 402 (VVE), K407, and S429 each bind NAD(+). Catalysis depends on H450, which acts as the For 3-hydroxyacyl-CoA dehydrogenase activity. N453 is a binding site for NAD(+). 2 residues coordinate substrate: N500 and Y660.

This sequence in the N-terminal section; belongs to the enoyl-CoA hydratase/isomerase family. It in the C-terminal section; belongs to the 3-hydroxyacyl-CoA dehydrogenase family. Heterotetramer of two alpha chains (FadB) and two beta chains (FadA).

It catalyses the reaction a (3S)-3-hydroxyacyl-CoA + NAD(+) = a 3-oxoacyl-CoA + NADH + H(+). The catalysed reaction is a (3S)-3-hydroxyacyl-CoA = a (2E)-enoyl-CoA + H2O. The enzyme catalyses a 4-saturated-(3S)-3-hydroxyacyl-CoA = a (3E)-enoyl-CoA + H2O. It carries out the reaction (3S)-3-hydroxybutanoyl-CoA = (3R)-3-hydroxybutanoyl-CoA. It catalyses the reaction a (3Z)-enoyl-CoA = a 4-saturated (2E)-enoyl-CoA. The catalysed reaction is a (3E)-enoyl-CoA = a 4-saturated (2E)-enoyl-CoA. It functions in the pathway lipid metabolism; fatty acid beta-oxidation. In terms of biological role, involved in the aerobic and anaerobic degradation of long-chain fatty acids via beta-oxidation cycle. Catalyzes the formation of 3-oxoacyl-CoA from enoyl-CoA via L-3-hydroxyacyl-CoA. It can also use D-3-hydroxyacyl-CoA and cis-3-enoyl-CoA as substrate. The chain is Fatty acid oxidation complex subunit alpha from Klebsiella pneumoniae subsp. pneumoniae (strain ATCC 700721 / MGH 78578).